The chain runs to 1219 residues: MVGMSRIILNNLFFFRCVVAVFSAHSLVISGAVHAGVQISQSPLHGGGDVPGNLAIVASIEFPTVISVANLADTYTPGVRYVGYFDSNKCYKYHYSSRELDRYFYPVASPRPQANYGCNTTGGVWAGNFLNWAATQTIDPFRSALTGGYRVRDTANETILEKAVMDRAYPGNFPRRTIEGLALTTSVPAQWLRFRMRIDGLGNRMRFTQFPGLSTDPLNTEGQPYDPSRHPLNSNDRGVYEVSVRVKVCDASVGLESNCVAYPSGFYKPEGLVQEYSKRVRYSVFSYKNDDYYLDDGGVLRARQKFVGPKTYYPEQGEKTNPHAEWHPRTGVLYDNPNPEDAKATTHRVGRTIGNSGVINYLNKFSQMETGKNTKGFDPVSELYYTAYRYFKRLGNVPEYSVLTGSVNEKYQQADAFPVITDWDDPIRYACQSNVVLGIGDTHTNFDKNLPGNTNTTGEPVKPQAVRNDRSIDVVKRMAQIFQMEGMRQQDAMTSALAPSFNFLVPGAGNNSAYIAALAYDAHTKDMRPDLEGDQLLTTHWVDVVEGGDYKIPISTNQYWLAAKYGGFQVPAGYDPDKTVNPLSEATWWTNGEYVNGDTKAKRADNFYIAADAEKMVASLKHAFSRIVAEIKGAGTGLSSNSARLETGAVTYQAQFFSGTWRGDLIAYHVDKVTGALTPFWNANFPAWEQRVIKFANATTLQDFTKKNLGQTALASASAQQINYLRGDRSQEGNVPGKLRIRSGIMGDIVNSQPLYVGAPNGRLYTTANFTGASAYAAFAAQQANRVPVVYVGANDGMLHAFDANTGKEIFAFVPRAAMPKLLEYTDQNYGHQYYVDGELTAADIYDTKLGWRSVLVGTLGRGGKGLFALDVTDPSNIRLLWDKTSADIGGLGNTLSKPMIAQTSDGTWSVLLGNGPNSTADNAQLIVMNLLTGHAAQVPVSKTSNNGLSGVFPWSSQSNGITDRVYAGDLLGTLWRFTFSDNAWKVAPLFTATYQGKAQPISATPLGAIERSTGRMWIFFGTGRALSSHDMDNKEVQSWYGLIDQGTTIPGRTRLSQVQIVDEGVVNGYAVRTVSDPKNIGTDGWYMDLISPKSGKQGERMIVSNMFRGAALIGTTRIPDNSDICKLSGSGFVMAINPFTGGRLGQWFFDLNTGGGSGGALNGNPVSGVGVSSAPNSPVFTGNIMQIGADDGTVTSLKTPSSGGLNINRVSWREILRP.

The signal sequence occupies residues 1 to 35 (MVGMSRIILNNLFFFRCVVAVFSAHSLVISGAVHA). Residues 212–234 (GLSTDPLNTEGQPYDPSRHPLNS) form a disordered region. Residues Gln958, Asn960, Ile962, and Asp964 each coordinate Ca(2+).

Belongs to the PilY1 family.

The protein localises to the fimbrium. One of the three PilY1 homologs of X.fastidiosa, which are involved in bacterial twitching motility as component of the filamentous type IV pili (T4P). The polypeptide is Type IV pilus biogenesis factor PilY1 homolog PD_0502 (Xylella fastidiosa (strain Temecula1 / ATCC 700964)).